Reading from the N-terminus, the 218-residue chain is Glutathione S-transferase Mu 7 (218 aa).

The 87-residue stretch at 2–88 (PMTLGYWDIR…YLGRKHNLCG (87 aa)) folds into the GST N-terminal domain. Residues 7-8 (YW), 46-50 (WLNEK), 59-60 (NL), and 72-73 (QS) contribute to the glutathione site. The region spanning 90–208 (TEEERIRVDI…KSSRFLPRPL (119 aa)) is the GST C-terminal domain. A substrate-binding site is contributed by Y116.

The protein belongs to the GST superfamily. Mu family. Homodimer.

It is found in the cytoplasm. The catalysed reaction is RX + glutathione = an S-substituted glutathione + a halide anion + H(+). Its function is as follows. Conjugation of reduced glutathione to a wide number of exogenous and endogenous hydrophobic electrophiles. This Rattus norvegicus (Rat) protein is Glutathione S-transferase Mu 7.